The chain runs to 127 residues: Large ribosomal subunit protein uL22 (127 aa).

It belongs to the universal ribosomal protein uL22 family. In terms of assembly, part of the 50S ribosomal subunit.

In terms of biological role, this protein binds specifically to 23S rRNA; its binding is stimulated by other ribosomal proteins, e.g. L4, L17, and L20. It is important during the early stages of 50S assembly. It makes multiple contacts with different domains of the 23S rRNA in the assembled 50S subunit and ribosome. Its function is as follows. The globular domain of the protein is located near the polypeptide exit tunnel on the outside of the subunit, while an extended beta-hairpin is found that lines the wall of the exit tunnel in the center of the 70S ribosome. The protein is Large ribosomal subunit protein uL22 of Methylorubrum extorquens (strain CM4 / NCIMB 13688) (Methylobacterium extorquens).